We begin with the raw amino-acid sequence, 56 residues long: Large ribosomal subunit protein bL32 (56 aa).

The tract at residues 1–56 (MAVPARRTSKAKKNKRRTHKGLTTPGLSRDSETGEYRMSHRISPDGTYKGRTIIEK) is disordered. Over residues 7–20 (RTSKAKKNKRRTHK) the composition is skewed to basic residues. Over residues 29 to 38 (RDSETGEYRM) the composition is skewed to basic and acidic residues.

It belongs to the bacterial ribosomal protein bL32 family.

This is Large ribosomal subunit protein bL32 from Listeria monocytogenes serotype 4a (strain HCC23).